The sequence spans 42 residues: Beta-defensin 6 (42 aa).

Position 1 is a pyrrolidone carboxylic acid (glutamine 1). Intrachain disulfides connect cysteine 9–cysteine 38, cysteine 16–cysteine 31, and cysteine 21–cysteine 39.

It belongs to the beta-defensin family. As to expression, neutrophilic granules.

It localises to the secreted. In terms of biological role, has bactericidal activity. Active against E.coli ML35 and S.aureus 502A. The protein is Beta-defensin 6 (DEFB6) of Bos taurus (Bovine).